Here is a 138-residue protein sequence, read N- to C-terminus: Large ribosomal subunit protein bL17 (138 aa).

The protein belongs to the bacterial ribosomal protein bL17 family. Part of the 50S ribosomal subunit. Contacts protein L32.

The chain is Large ribosomal subunit protein bL17 from Dinoroseobacter shibae (strain DSM 16493 / NCIMB 14021 / DFL 12).